Here is a 25-residue protein sequence, read N- to C-terminus: GLLSSLSSVAKHVLPHVVPVIAEHL.

Leucine 25 carries the post-translational modification Leucine amide.

It belongs to the frog skin active peptide (FSAP) family. Caerin subfamily. Expressed by the skin parotoid and/or rostral glands.

It is found in the secreted. Antibacterial peptide, that adopts an alpha helical conformation which can disrupt bacterial membranes. Each caerin displays a different antimicrobial specificity. This chain is Caerin-1.4, found in Ranoidea caerulea (Green tree frog).